Consider the following 153-residue polypeptide: Ribosome maturation factor RimP (153 aa).

The protein belongs to the RimP family.

It localises to the cytoplasm. Required for maturation of 30S ribosomal subunits. The sequence is that of Ribosome maturation factor RimP from Histophilus somni (strain 2336) (Haemophilus somnus).